Reading from the N-terminus, the 204-residue chain is VEL1-related protein AC977.05c (204 aa).

An N-terminal signal peptide occupies residues 1 to 17 (MIFKNLISLFFIGLATA).

It belongs to the VEL1 family.

It localises to the cytoplasm. It is found in the cytosol. The protein is VEL1-related protein AC977.05c of Schizosaccharomyces pombe (strain 972 / ATCC 24843) (Fission yeast).